The chain runs to 261 residues: tRNA pseudouridine synthase A (261 aa).

Asp51 serves as the catalytic Nucleophile. Residue Tyr109 participates in substrate binding.

Belongs to the tRNA pseudouridine synthase TruA family. Homodimer.

It catalyses the reaction uridine(38/39/40) in tRNA = pseudouridine(38/39/40) in tRNA. Its function is as follows. Formation of pseudouridine at positions 38, 39 and 40 in the anticodon stem and loop of transfer RNAs. This is tRNA pseudouridine synthase A from Shewanella frigidimarina (strain NCIMB 400).